The chain runs to 490 residues: MSAKTIMIQGATSDAGKSALATGLCRLLARRGVKVAPFKPQNMALNSAVTADGGEIGRSQAVQAQACGVEPHTDMNPVLLKPNSHTGSQVIIQGRAIGNMEARGYHGYKPVAMKAVLASHARLAAQYQCIVAEGAGSPAEINLRDGDIANMGFAEAVDCPVILVADIERGGVFAHLAGTLALLSESERARVVGLVINRFRGDPSLLKTGVDWLERHTGKPVLGVLPYLYDLHLEAEDSMGLDKPGGAVGGGDKLRVAAPAAPRVSNHTDFDPLRLHPQVEFTLVRAGQAIPPADLIVLPGSKNVLADLAWLRAQGWDEALRRHLRYGGKVLGICGGLQMLGKKLHDPDGLEGEPGSGDGLGWLDMETTLAPEKRLTRMRGRLTLGDAEAAGYEIHMGVSQGPALARPAVRFDDGSADGARSEDDQIFATYLHGVFDEPAACQAILRWAGLKEPEALDYPALREANIDKLADMLERHLDLEPIRRWLPETR.

The GATase cobBQ-type domain occupies 253–440 (KLRVAAPAAP…LHGVFDEPAA (188 aa)). C334 functions as the Nucleophile in the catalytic mechanism. H432 is a catalytic residue.

It belongs to the CobB/CobQ family. CobQ subfamily.

Its pathway is cofactor biosynthesis; adenosylcobalamin biosynthesis. Functionally, catalyzes amidations at positions B, D, E, and G on adenosylcobyrinic A,C-diamide. NH(2) groups are provided by glutamine, and one molecule of ATP is hydrogenolyzed for each amidation. The protein is Cobyric acid synthase of Chromobacterium violaceum (strain ATCC 12472 / DSM 30191 / JCM 1249 / CCUG 213 / NBRC 12614 / NCIMB 9131 / NCTC 9757 / MK).